The chain runs to 387 residues: Succinate--CoA ligase [ADP-forming] subunit beta (387 aa).

The ATP-grasp domain maps to 9–244 (KRLLAEEGVP…STQQDGREIT (236 aa)). ATP is bound by residues Lys-46, 53-55 (GRG), Glu-99, Ser-102, and Glu-107. Residues Asn-199 and Asp-213 each coordinate Mg(2+). Residues Asn-264 and 321–323 (GIT) contribute to the substrate site.

The protein belongs to the succinate/malate CoA ligase beta subunit family. Heterotetramer of two alpha and two beta subunits. Mg(2+) is required as a cofactor.

It carries out the reaction succinate + ATP + CoA = succinyl-CoA + ADP + phosphate. It catalyses the reaction GTP + succinate + CoA = succinyl-CoA + GDP + phosphate. The protein operates within carbohydrate metabolism; tricarboxylic acid cycle; succinate from succinyl-CoA (ligase route): step 1/1. Its function is as follows. Succinyl-CoA synthetase functions in the citric acid cycle (TCA), coupling the hydrolysis of succinyl-CoA to the synthesis of either ATP or GTP and thus represents the only step of substrate-level phosphorylation in the TCA. The beta subunit provides nucleotide specificity of the enzyme and binds the substrate succinate, while the binding sites for coenzyme A and phosphate are found in the alpha subunit. This is Succinate--CoA ligase [ADP-forming] subunit beta from Acidithiobacillus ferrooxidans (strain ATCC 23270 / DSM 14882 / CIP 104768 / NCIMB 8455) (Ferrobacillus ferrooxidans (strain ATCC 23270)).